A 460-amino-acid chain; its full sequence is Cysteine--tRNA ligase (460 aa).

Residue Cys28 coordinates Zn(2+). The 'HIGH' region motif lies at 30–40; the sequence is MTVYDYCHLGH. Zn(2+) is bound by residues Cys209, His234, and Glu238. Residues 266–270 carry the 'KMSKS' region motif; it reads KMSKS. Lys269 provides a ligand contact to ATP.

Belongs to the class-I aminoacyl-tRNA synthetase family. As to quaternary structure, monomer. Zn(2+) is required as a cofactor.

The protein localises to the cytoplasm. The enzyme catalyses tRNA(Cys) + L-cysteine + ATP = L-cysteinyl-tRNA(Cys) + AMP + diphosphate. The chain is Cysteine--tRNA ligase from Pseudomonas aeruginosa (strain LESB58).